Reading from the N-terminus, the 341-residue chain is UDP-N-acetylenolpyruvoylglucosamine reductase (341 aa).

In terms of domain architecture, FAD-binding PCMH-type spans 15-185 (VTQSCLSLIE…TAVGLRLPKT (171 aa)). The active site involves R161. The active-site Proton donor is S231. The active site involves E327.

The protein belongs to the MurB family. The cofactor is FAD.

Its subcellular location is the cytoplasm. The catalysed reaction is UDP-N-acetyl-alpha-D-muramate + NADP(+) = UDP-N-acetyl-3-O-(1-carboxyvinyl)-alpha-D-glucosamine + NADPH + H(+). It functions in the pathway cell wall biogenesis; peptidoglycan biosynthesis. Its function is as follows. Cell wall formation. This is UDP-N-acetylenolpyruvoylglucosamine reductase from Shewanella oneidensis (strain ATCC 700550 / JCM 31522 / CIP 106686 / LMG 19005 / NCIMB 14063 / MR-1).